Here is a 526-residue protein sequence, read N- to C-terminus: MSTTVRPDEVSSILRKQLAGFESEAEVYDVGTVLQVGDGIARVYGLLKAAAGELLEFPHNIMGMVLNLEEDNVGAVMFGASNAVKEGDTVRRTGILASIPVGEAMLGRVINPLGEPIDGKGAIETSIRLPLERRAPGVIYRKSVHEPLQTGLKAIDAMIPIGRGQRELIIGDRQTGKTAVALDTIINQKGKGVYCIYVAIGLKGSTVAQVVNTLEKHGAMEYTTVISATASDPAPLQFIAPFAGAALGEYFRDTGRHALVIYDDLSKQAVAYRQLSLLLRRPPGREAYPGDVFFLHSRLLERAAKITDDIEVAKKMNDLPEALKPMVKGGGSLTALPVIETQAGDVSAYIPTNVISITDGQIFLESNLFNSGQRPAINVGISVSRVGGAAQIKAMKKVAGTLRLDLAQFRELEAFSKFGSDLDKTTKAQLDRGARLVEILKQGQYIPMPVEKQVAIIFLGTQGLLDAVAVDHIRKFEEDFLAMLELKHPEILKSIEEKGSLEPDTANGLKEAAAKFIITFNEKAKA.

Residue 171–178 (GDRQTGKT) participates in ATP binding.

It belongs to the ATPase alpha/beta chains family. F-type ATPases have 2 components, CF(1) - the catalytic core - and CF(0) - the membrane proton channel. CF(1) has five subunits: alpha(3), beta(3), gamma(1), delta(1), epsilon(1). CF(0) has four main subunits: a(1), b(1), b'(1) and c(9-12).

Its subcellular location is the cell inner membrane. The catalysed reaction is ATP + H2O + 4 H(+)(in) = ADP + phosphate + 5 H(+)(out). Its function is as follows. Produces ATP from ADP in the presence of a proton gradient across the membrane. The alpha chain is a regulatory subunit. In Chlorobium phaeovibrioides (strain DSM 265 / 1930) (Prosthecochloris vibrioformis (strain DSM 265)), this protein is ATP synthase subunit alpha.